Here is a 476-residue protein sequence, read N- to C-terminus: MNFETTIGLEVHIELKTNSKMYSPSPVNYGAEPNTNTNVIDWGYPGTLPTLNKGAYTLGMMVATALHADIARDTHFDRKNYFYPDNPKAYQITQYEQPLGKDGYIEVEIDGHKKQIGIAELHVEEDAGKNTHGSDGYSYVDLNRQGTALIEIVSKPDMSTPEEAYAYLETLRQIVQFTGASDVKMEEGSMRVDTNISVRPIGAKKYGVKSELKNLNSFNHVRLGLAYEIKRQSQLLIAGETIRPETRRFDEKSGETYLMRVKSGADDYRYFPEPDLPPMHIGDDWLKEVQDNMPEMPAKRRTRYVDELGLPEYDAGVLTNTKEMSDFFEAAVANGAAPKQVSNWLMGEVNAYLNDKQIDLQETALTPEHLAQMINLIKDGIISSKIAKKVFQEIIQNDTDPKAWVEAKGMVQLSDPAKLTPIITGILDDNQQSIDDFKNGKDRAVGFLVGKIMKETRGQANPKVVNDLLMAELNKR.

This sequence belongs to the GatB/GatE family. GatB subfamily. As to quaternary structure, heterotrimer of A, B and C subunits.

The catalysed reaction is L-glutamyl-tRNA(Gln) + L-glutamine + ATP + H2O = L-glutaminyl-tRNA(Gln) + L-glutamate + ADP + phosphate + H(+). It catalyses the reaction L-aspartyl-tRNA(Asn) + L-glutamine + ATP + H2O = L-asparaginyl-tRNA(Asn) + L-glutamate + ADP + phosphate + 2 H(+). In terms of biological role, allows the formation of correctly charged Asn-tRNA(Asn) or Gln-tRNA(Gln) through the transamidation of misacylated Asp-tRNA(Asn) or Glu-tRNA(Gln) in organisms which lack either or both of asparaginyl-tRNA or glutaminyl-tRNA synthetases. The reaction takes place in the presence of glutamine and ATP through an activated phospho-Asp-tRNA(Asn) or phospho-Glu-tRNA(Gln). The protein is Aspartyl/glutamyl-tRNA(Asn/Gln) amidotransferase subunit B of Latilactobacillus sakei subsp. sakei (strain 23K) (Lactobacillus sakei subsp. sakei).